Here is a 509-residue protein sequence, read N- to C-terminus: MMNSPRSLDSSDGSVDSSSVYSGTSSFGSSFTSSTGSGFTNSMLFDDEEAKKKKIRQMQNRQSAAQYRERKKEYLEKLETIVDNLESDRNQLLQQTKQLGMLQNENYLKINQLEEQIESALRENNDLKSRLSDLLSKQQPHDNSNSNSNSNNNSNVSPNNSINILNNNNSSSSNNNNNNSNSNNGGIGSFSNILNNNINNNISSSSPSTPSCSSPSFLEGRHFSHLQQQQQQQPQQQNSPQILQSPIPLQHSPLPIQQISPSSPNQNINRRSRFNIGESRERSILNPISIENVNNNNNNNIKLNGSGDMDTSSDNNSSMNINSINNSSNLNGFNGLSSPNQQPNSPSNRSQPKRQRDLFLQQQQQQQHSDPSSPNISSNNLLLLNNPNGGINSNNNSNSNNSNNSNNSNNIINNNNTSYTPPLASFTSILSIASSPSSSPVISSLAQLSSSPNYNSGGFSSFIDSNNNNSNNNNSGLENNSPSRRYKFHNGGINNISSGNLNSLKGIPK.

The segment at Met-1–Ser-42 is disordered. Residues Ser-10–Phe-39 are compositionally biased toward low complexity. The bZIP domain occupies Ala-50–Leu-113. The segment at Lys-51–Lys-77 is basic motif. The tract at residues Leu-78 to Leu-99 is leucine-zipper. 4 disordered regions span residues Leu-134 to Gly-185, Phe-223 to Asn-275, Ile-290 to Asn-414, and Ser-465 to Lys-509. Composition is skewed to low complexity over residues Leu-226 to Pro-248, Pro-255 to Asn-269, Asn-292 to Ser-350, Gln-361 to Asn-414, Ser-465 to Ser-483, and Asn-490 to Lys-509.

The protein belongs to the bZIP family.

It is found in the nucleus. In terms of biological role, probable transcriptional regulator. This chain is Probable basic-leucine zipper transcription factor H (bzpH), found in Dictyostelium discoideum (Social amoeba).